A 559-amino-acid chain; its full sequence is Terpene synthase 1 (559 aa).

4 residues coordinate Mg(2+): D312, D316, D456, and E464. A DDXXD motif motif is present at residues 312–316 (DDLYD).

Belongs to the terpene synthase family. Tpsa subfamily. Requires Mg(2+) as cofactor. It depends on Mn(2+) as a cofactor. In terms of tissue distribution, mostly expressed in stems and, to a lower extent, in leaves, roots and fruits.

The enzyme catalyses (2E,6E)-farnesyl diphosphate = (-)-(E)-beta-caryophyllene + diphosphate. The catalysed reaction is (2E,6E)-farnesyl diphosphate = alpha-humulene + diphosphate. It functions in the pathway secondary metabolite biosynthesis; terpenoid biosynthesis. Its function is as follows. Sesquiterpene synthase involved in the biosynthesis of volatile compounds that contribute to the characteristic flavors of black pepper. Mediates the conversion of (2E,6E)-farnesyl diphosphate (FPP) into beta-caryophyllene and, as a minor compound, into alpha-humulene. In Piper nigrum (Black pepper), this protein is Terpene synthase 1.